A 222-amino-acid polypeptide reads, in one-letter code: Probable fimbrial chaperone EcpB (222 aa).

The N-terminal stretch at 1–20 (MKKHLLPLALLFSGISPAQA) is a signal peptide.

The protein belongs to the EcpB/EcpE family.

In terms of biological role, part of the ecpRABCDE operon, which encodes the E.coli common pilus (ECP). ECP is found in both commensal and pathogenic strains and plays a dual role in early-stage biofilm development and host cell recognition. The polypeptide is Probable fimbrial chaperone EcpB (ecpB) (Escherichia coli (strain K12)).